We begin with the raw amino-acid sequence, 216 residues long: ATP phosphoribosyltransferase (216 aa).

The protein belongs to the ATP phosphoribosyltransferase family. Short subfamily. Heteromultimer composed of HisG and HisZ subunits.

The protein resides in the cytoplasm. The catalysed reaction is 1-(5-phospho-beta-D-ribosyl)-ATP + diphosphate = 5-phospho-alpha-D-ribose 1-diphosphate + ATP. The protein operates within amino-acid biosynthesis; L-histidine biosynthesis; L-histidine from 5-phospho-alpha-D-ribose 1-diphosphate: step 1/9. Functionally, catalyzes the condensation of ATP and 5-phosphoribose 1-diphosphate to form N'-(5'-phosphoribosyl)-ATP (PR-ATP). Has a crucial role in the pathway because the rate of histidine biosynthesis seems to be controlled primarily by regulation of HisG enzymatic activity. The polypeptide is ATP phosphoribosyltransferase (Synechococcus sp. (strain CC9902)).